We begin with the raw amino-acid sequence, 134 residues long: Transcriptional activator protein (134 aa).

Positions 17 to 31 (KVQHRIAKKTTRRRR) match the Nuclear localization signal motif. A zinc finger spans residues 36–53 (CGCSYFVALGCHNHGFTH). The disordered stretch occupies residues 73 to 103 (KSPVFQDNQTPRETISEEPRHNHNTSPIQLQ). Residues 75–85 (PVFQDNQTPRE) are compositionally biased toward polar residues. Positions 119–134 (NLDSFTSSDLAFLKSI) are transactivation.

It belongs to the geminiviridae transcriptional activator protein family. In terms of assembly, monomer. Homodimer. Homooligomer. Self-interaction correlates with nuclear localization and efficient activation of transcription. Monomers suppress local silencing by interacting with and inactivating host adenosine kinase 2 (ADK2) in the cytoplasm. Interacts with and inhibits host SNF1 kinase. Binds to ssDNA. May interact with host RPS27A. Phosphorylated.

The protein resides in the host nucleus. The protein localises to the host cytoplasm. Multifunctional protein that modulates host antiviral defenses and promotes host attractiveness to insect vectors. Acts as a suppressor of RNA-mediated gene silencing, also known as post-transcriptional gene silencing (PTGS), a mechanism of plant viral defense that limits the accumulation of viral RNAs. TrAP suppresses the host RNA silencing by inhibiting adenosine kinase 2 (ADK2), a kinase involved in a general methylation pathway. Also suppresses the host basal defense by interacting with and inhibiting SNF1 kinase, a key regulator of cell metabolism implicated in innate antiviral defense. In terms of biological role, inhibits signal transduction by the phytohormone jasmonate, making the infected plant more attractive to aphids, which are the second host to play a role as a dissemination vector. Acts by binding to ubiquitin precursor RPS27A, thereby preventing ubiquitin degradation of JAZ. In Tomato yellow leaf curl China virus (TYLCCNV), this protein is Transcriptional activator protein.